A 275-amino-acid chain; its full sequence is MNSKVALLVVGLAVVLALVIGRQGPVAPQATNTQSQAVAAGPVAAPVAFPQPLYPQAANVAMPVEPDPAAGGGTAPATESPLPNFVPRKLKVFEGHWQGMDGRLMTEELARKLNYPRGLQGVLLGEVTLNAAFSGLLAGDLIVRIDDTPVTDMESFKAASRTVANRSDARISVLRKDNRPGAPVVRKLTVVLREAEGGLGFAQLEGAPMILAGDPRPHGYRGACTDCHPIGQGFELTPDPDLISLPPPTITRDMVARSVNPHEVRGPCEACHVIK.

At Met-1–Ala-6 the chain is on the cytoplasmic side. Positions Leu-7–Ile-20 form a transmembrane segment. Over Gly-21 to Lys-275 the chain is Lumenal. The tract at residues Lys-89–Gly-206 is PDZ. Positions Ile-210–Ile-230 match the MCR (magnetochrome) 1 motif. Residues Cys-224, Cys-227, His-228, Cys-268, Cys-271, and His-272 each contribute to the heme site. An MCR 2 motif is present at residues Ile-250 to Ile-274.

This sequence belongs to the magnetosome MamP family. Homodimer. Heme is required as a cofactor. In terms of processing, subject to proteolytic cleavage which requires both MamE and MamO.

Its subcellular location is the cell inner membrane. In terms of biological role, involved in redox-control of magnetite formation; oxidizes Fe(2+) to Fe(3+) or to mixed-valent Fe(2+)-Fe(3+) oxide minerals. May control magnetite crystal size and number. Overproduction of MamP leads to more crystals than normal during exponential growth of normal size; in stationary phase crystal numbers become wild-type. This chain is Multi-heme protein MamP (mamP), found in Paramagnetospirillum magneticum (strain ATCC 700264 / AMB-1) (Magnetospirillum magneticum).